A 434-amino-acid polypeptide reads, in one-letter code: Nicotinate phosphoribosyltransferase (434 aa).

His-242 carries the post-translational modification Phosphohistidine; by autocatalysis.

The protein belongs to the NAPRTase family. Post-translationally, transiently phosphorylated on a His residue during the reaction cycle. Phosphorylation strongly increases the affinity for substrates and increases the rate of nicotinate D-ribonucleotide production. Dephosphorylation regenerates the low-affinity form of the enzyme, leading to product release.

The catalysed reaction is nicotinate + 5-phospho-alpha-D-ribose 1-diphosphate + ATP + H2O = nicotinate beta-D-ribonucleotide + ADP + phosphate + diphosphate. It participates in cofactor biosynthesis; NAD(+) biosynthesis; nicotinate D-ribonucleotide from nicotinate: step 1/1. In terms of biological role, catalyzes the synthesis of beta-nicotinate D-ribonucleotide from nicotinate and 5-phospho-D-ribose 1-phosphate at the expense of ATP. The polypeptide is Nicotinate phosphoribosyltransferase (Brucella melitensis biotype 1 (strain ATCC 23456 / CCUG 17765 / NCTC 10094 / 16M)).